A 378-amino-acid chain; its full sequence is Succinyl-diaminopimelate desuccinylase (378 aa).

Zn(2+) is bound at residue His-68. Asp-70 is a catalytic residue. Residue Asp-101 participates in Zn(2+) binding. The active-site Proton acceptor is the Glu-135. Residues Glu-136, Glu-164, and His-350 each coordinate Zn(2+).

It belongs to the peptidase M20A family. DapE subfamily. Homodimer. Zn(2+) is required as a cofactor. It depends on Co(2+) as a cofactor.

The catalysed reaction is N-succinyl-(2S,6S)-2,6-diaminopimelate + H2O = (2S,6S)-2,6-diaminopimelate + succinate. The protein operates within amino-acid biosynthesis; L-lysine biosynthesis via DAP pathway; LL-2,6-diaminopimelate from (S)-tetrahydrodipicolinate (succinylase route): step 3/3. Catalyzes the hydrolysis of N-succinyl-L,L-diaminopimelic acid (SDAP), forming succinate and LL-2,6-diaminopimelate (DAP), an intermediate involved in the bacterial biosynthesis of lysine and meso-diaminopimelic acid, an essential component of bacterial cell walls. The chain is Succinyl-diaminopimelate desuccinylase from Vibrio atlanticus (strain LGP32) (Vibrio splendidus (strain Mel32)).